The chain runs to 473 residues: Azaphilone pigments biosynthesis cluster protein L (473 aa).

A signal peptide spans 1–23 (MAELSIASGIVGLLSLGIQVTQS). 2 ANK repeats span residues 403–432 (EYGNALQAASSGGHWKVVQMLLDQGADVNA) and 436–465 (RYGNALHAASSRGHKKVVQMLLDHGANVST). An N-linked (GlcNAc...) asparagine glycan is attached at Asn-462.

Part of the gene cluster that mediates the biosynthesis of azaphilone pigments (MonAzPs), a complex mixture of compounds with a common azaphilone skeleton very widely used as food colorants. Seems not to play a direct role in the biosynthesis but might have a regulatorx function. In Monascus ruber (Mold), this protein is Azaphilone pigments biosynthesis cluster protein L.